Reading from the N-terminus, the 199-residue chain is WASH complex subunit 3 (199 aa).

Positions 47–76 (VCEEKLSALSLRIQQIETTLNILEAKLSSI) form a coiled coil. The span at 93-120 (NISNGHLPSQPDAQSVVVSPQSDNNSMN) shows a compositional bias: polar residues. 2 disordered regions span residues 93-136 (NISN…NITT) and 170-199 (PDLL…SFSD). Residues 183 to 192 (GEPEAEESSD) show a composition bias toward acidic residues.

Belongs to the CCDC53 family. Component of the WASH complex.

This is WASH complex subunit 3 from Xenopus laevis (African clawed frog).